Consider the following 2415-residue polypeptide: Spectrin alpha chain, erythrocytic 1 (2415 aa).

9 Spectrin repeats span residues 52–152, 157–259, 263–365, 370–471, 475–576, 580–681, 686–787, 792–894, and 898–967; these read YHYQ…SDVL, KFYQ…ESLS, DLQR…AKLK, YHRF…HQYR, DFHL…RKLL, QLLQ…GTQL, QLLQ…KKKL, KLQQ…NDLK, and QLQQ…QQQQ. At Ser257 the chain carries Phosphoserine. One can recognise an SH3 domain in the interval 975–1034; sequence GREARVIALYDFEARSRREVSMKKNDVLTLLSSINKDWWKVEADDHQGFVPAVYVRKLAP. Ser990 carries the post-translational modification Phosphoserine. 11 Spectrin repeats span residues 1085 to 1177, 1183 to 1285, 1287 to 1390, 1394 to 1489, 1499 to 1603, 1606 to 1709, 1712 to 1815, 1818 to 1921, 1924 to 2029, 2040 to 2142, and 2154 to 2254; these read LAYE…YQLL, VEMF…SLNE, HKFF…KMLD, ELQL…QLLT, DLKQ…KLNE, RQQR…KLKE, ALFQ…NLEE, EYLQ…SQLD, HAFQ…KLLE, LFME…QELQ, and MCQE…NLEQ. Phosphoserine is present on Ser1972. EF-hand domains lie at 2267–2302, 2310–2345, and 2347–2382; these read ETLK…LNYY, EPEP…KESE, and IKTS…EQVS. Asp2280, Asn2282, Thr2284, Arg2286, Glu2291, Asp2323, Tyr2329, and Asp2334 together coordinate Ca(2+).

The protein belongs to the spectrin family. As to quaternary structure, composed of non-homologous chains, alpha and beta, which aggregate to form dimers, tetramers, and higher polymers. Interacts with FASLG. Interacts with BCAM.

It is found in the cytoplasm. The protein localises to the cytoskeleton. Its subcellular location is the cell cortex. Its function is as follows. Spectrin is the major constituent of the cytoskeletal network underlying the erythrocyte plasma membrane. It associates with band 4.1 and actin to form the cytoskeletal superstructure of the erythrocyte plasma membrane. This chain is Spectrin alpha chain, erythrocytic 1 (Spta1), found in Mus musculus (Mouse).